An 82-amino-acid polypeptide reads, in one-letter code: Small ribosomal subunit protein bS16 (82 aa).

This sequence belongs to the bacterial ribosomal protein bS16 family.

The sequence is that of Small ribosomal subunit protein bS16 from Shewanella sp. (strain MR-4).